A 255-amino-acid chain; its full sequence is Urease accessory protein UreD 1 (255 aa).

The protein belongs to the UreD family. UreD, UreF and UreG form a complex that acts as a GTP-hydrolysis-dependent molecular chaperone, activating the urease apoprotein by helping to assemble the nickel containing metallocenter of UreC. The UreE protein probably delivers the nickel.

It is found in the cytoplasm. Its function is as follows. Required for maturation of urease via the functional incorporation of the urease nickel metallocenter. This chain is Urease accessory protein UreD 1, found in Saccharopolyspora erythraea (strain ATCC 11635 / DSM 40517 / JCM 4748 / NBRC 13426 / NCIMB 8594 / NRRL 2338).